The sequence spans 247 residues: 1-(5-phosphoribosyl)-5-[(5-phosphoribosylamino)methylideneamino] imidazole-4-carboxamide isomerase 2 (247 aa).

Catalysis depends on E8, which acts as the Proton acceptor. Residue D128 is the Proton donor of the active site.

This sequence belongs to the HisA/HisF family.

It localises to the cytoplasm. It catalyses the reaction 1-(5-phospho-beta-D-ribosyl)-5-[(5-phospho-beta-D-ribosylamino)methylideneamino]imidazole-4-carboxamide = 5-[(5-phospho-1-deoxy-D-ribulos-1-ylimino)methylamino]-1-(5-phospho-beta-D-ribosyl)imidazole-4-carboxamide. Its pathway is amino-acid biosynthesis; L-histidine biosynthesis; L-histidine from 5-phospho-alpha-D-ribose 1-diphosphate: step 4/9. This chain is 1-(5-phosphoribosyl)-5-[(5-phosphoribosylamino)methylideneamino] imidazole-4-carboxamide isomerase 2, found in Ruegeria pomeroyi (strain ATCC 700808 / DSM 15171 / DSS-3) (Silicibacter pomeroyi).